Here is a 533-residue protein sequence, read N- to C-terminus: Probable galacturonosyltransferase 13 (533 aa).

The Cytoplasmic segment spans residues methionine 1–histidine 40. The chain crosses the membrane as a helical; Signal-anchor for type II membrane protein span at residues threonine 41 to leucine 61. The Lumenal portion of the chain corresponds to glutamate 62 to glutamate 533. Asparagine 306, asparagine 396, asparagine 445, and asparagine 520 each carry an N-linked (GlcNAc...) asparagine glycan.

It belongs to the glycosyltransferase 8 family. As to expression, expressed in roots, inflorescences, siliques, leaves and stems. Accumulates in pollen grains.

It is found in the golgi apparatus membrane. The protein operates within glycan metabolism; pectin biosynthesis. Its function is as follows. May be involved in pectin and/or xylans biosynthesis in cell walls. Together with GAUT14, required for pollen tube growth, possibly through the regulation of pectin biosynthesis and repartition in the pollen tube wall. This is Probable galacturonosyltransferase 13 from Arabidopsis thaliana (Mouse-ear cress).